A 273-amino-acid polypeptide reads, in one-letter code: Alkaline ceramidase 1 (273 aa).

At Met-1–Glu-36 the chain is on the lumenal side. Asp-22, Trp-23, Glu-25, Asn-27, and Glu-36 together coordinate Ca(2+). A helical membrane pass occupies residues Phe-37–Met-57. Topologically, residues His-58–Ser-72 are cytoplasmic. 2 consecutive transmembrane segments (helical) span residues Val-73–Gly-93 and Gln-94–Pro-114. Residue His-86 coordinates Zn(2+). Over Arg-115–Arg-126 the chain is Cytoplasmic. A helical transmembrane segment spans residues Phe-127–Lys-147. Residues Pro-148–Thr-149 lie on the Lumenal side of the membrane. The chain crosses the membrane as a helical span at residues Val-150 to Arg-167. Residues Thr-168–Asp-177 are Cytoplasmic-facing. A helical transmembrane segment spans residues Leu-178 to Ser-198. Residues Asp-199 to His-215 are Lumenal-facing. Zn(2+) is bound by residues His-215 and His-219. The helical transmembrane segment at Ser-216–Val-236 threads the bilayer. Residues Asp-237–Cys-273 are Cytoplasmic-facing.

Belongs to the alkaline ceramidase family. Zn(2+) is required as a cofactor. Highly expressed in skin. Weakly or not expressed in other tissues. Expressed by granular layer of interfollicular epidermis, sebaceous glands and infundibulum.

It is found in the endoplasmic reticulum membrane. It catalyses the reaction an N-acylsphing-4-enine + H2O = sphing-4-enine + a fatty acid. The catalysed reaction is N-tetracosanoyl-sphing-4-enine + H2O = tetracosanoate + sphing-4-enine. It carries out the reaction an N-acylsphinganine + H2O = sphinganine + a fatty acid. The enzyme catalyses N-(9Z-octadecenoyl)-sphing-4-enine + H2O = sphing-4-enine + (9Z)-octadecenoate. It catalyses the reaction N-(15Z-tetracosenoyl)-sphing-4-enine + H2O = (15Z)-tetracosenoate + sphing-4-enine. It participates in lipid metabolism; sphingolipid metabolism. Inhibited by sphingosine. Inhibited by Mn(2+), Zn(2+), and Cu(2+) in a dose-dependent manner. Slightly activated by Ca(2+) in a dose-dependent manner. Its function is as follows. Endoplasmic reticulum ceramidase that catalyzes the hydrolysis of ceramides into sphingosine and free fatty acids at alkaline pH. Ceramides, sphingosine, and its phosphorylated form sphingosine-1-phosphate are bioactive lipids that mediate cellular signaling pathways regulating several biological processes including cell proliferation, apoptosis and differentiation. Exhibits a strong substrate specificity towards the natural stereoisomer of ceramides with D-erythro-sphingosine as a backbone and has a higher activity towards very long-chain unsaturated fatty acids like the C24:1-ceramide. May also hydrolyze dihydroceramides to produce dihydrosphingosine. ACER1 is a skin-specific ceramidase that regulates the levels of ceramides, sphingosine and sphingosine-1-phosphate in the epidermis, mediates the calcium-induced differentiation of epidermal keratinocytes and more generally plays an important role in skin homeostasis. This Mus musculus (Mouse) protein is Alkaline ceramidase 1.